A 938-amino-acid polypeptide reads, in one-letter code: MSDYKSTLNLPETGFPMRGDLAKREPGMLARWTDDDLYGIIRAAKKGKKTFILHDGPPYANGSIHIGHSVNKILKDIIIKSKGLSGYDSPYVPGWDCHGLPIELKVEQEYGKPGEKFTAAEFRAKCREYAATQVDGQRKDFIRLGVLGDWSHPYLTMDFKTEANIIRALGKIIGNGHLHKGAKPVHWCVDCRSALAEAEVEYYDKTSPSIDVAFQAVDQDALKTKFGVSNVNGPISLVIWTTTPWTLPANRAISIAPDFDYALVQIDGQAVILAKDLVESVMQRIGVSDYTILGTVKGAELELLRFTHPFMDFDVPAILGDHVTLDAGTGAVHTAPGHGPDDYVIGQKYGLETANPVGPDGTYLPGTYPTLDGVNVFKANDIVIALLQEKGALLHVEKMQHSYPCCWRHKTPIIFRATPQWFVSMDQKGLRAQSLKEIKGVQWIPDWGQARIESMVANRPDWCISRQRTWGVPMSLFVHKDTEELHPRTLELMEEVAKRVEVDGIQAWWDLDAKEILGDEADQYVKVPDTLDVWFDSGSTHSSVVDVRPEFAGHAADMYLEGSDQHRGWFMSSLMISTAMKGKAPYRQVLTHGFTVDGQGRKMSKSIGNTVSPQDVMNKLGADILRLWVASTDYTGEMAVSDEILKRAADSYRRIRNTARFLLANLNGFDPAKDMVKPEEMVVLDRWAVGCAKAAQEDILKAYEAYDFHEVVQRLMRFCSVEMGSFYLDIIKDRQYTAKADSVARRSCQTALYHIAEALVRWMAPILSFTADEVWGYLPGEREKYVFTGEWYEGLFGLADSEAMNDAFWDELLKVRGEVNKVIEQARADKKVGGSLEAAVTLYAEPELAAKLTALGDELRFVLLTSGATVADYNDAPADAQQSEVLKGLKVALSKAEGEKCPRCWHYTQDVGKVAEHAEICGRCVSNVAGDGEKRKFA.

The 'HIGH' region signature appears at proline 58–histidine 68. Position 183 is an N6-acetyllysine (lysine 183). Glutamate 561 is a binding site for L-isoleucyl-5'-AMP. Residues lysine 602–serine 606 carry the 'KMSKS' region motif. An ATP-binding site is contributed by lysine 605. Zn(2+)-binding residues include cysteine 901, cysteine 904, cysteine 921, and cysteine 924.

This sequence belongs to the class-I aminoacyl-tRNA synthetase family. IleS type 1 subfamily. Monomer. Zn(2+) serves as cofactor.

It localises to the cytoplasm. It catalyses the reaction tRNA(Ile) + L-isoleucine + ATP = L-isoleucyl-tRNA(Ile) + AMP + diphosphate. In terms of biological role, catalyzes the attachment of isoleucine to tRNA(Ile). As IleRS can inadvertently accommodate and process structurally similar amino acids such as valine, to avoid such errors it has two additional distinct tRNA(Ile)-dependent editing activities. One activity is designated as 'pretransfer' editing and involves the hydrolysis of activated Val-AMP. The other activity is designated 'posttransfer' editing and involves deacylation of mischarged Val-tRNA(Ile). The sequence is that of Isoleucine--tRNA ligase from Escherichia coli O6:H1 (strain CFT073 / ATCC 700928 / UPEC).